A 557-amino-acid chain; its full sequence is Polypyrimidine tract-binding protein 1 (557 aa).

At M1 the chain carries N-acetylmethionine. S16 is subject to Phosphoserine. RRM domains lie at R59–N143, L184–L260, and S363–H437. K65 is covalently cross-linked (Glycyl lysine isopeptide (Lys-Gly) (interchain with G-Cter in SUMO2)). Residue Y127 is modified to Phosphotyrosine. T138 is subject to Phosphothreonine. S141 carries the post-translational modification Phosphoserine. A Glycyl lysine isopeptide (Lys-Gly) (interchain with G-Cter in SUMO2) cross-link involves residue K218. The segment at H437–P460 is disordered. Phosphoserine is present on S459. The 76-residue stretch at A480–S555 folds into the RRM 4 domain.

In terms of assembly, monomer. Part of a ternary complex containing KHSRP, PTBP1, PTBP2 and HNRPH1. Interacts with RAVER1 and SFPQ.

The protein resides in the nucleus. In terms of biological role, plays a role in pre-mRNA splicing and in the regulation of alternative splicing events. Activates exon skipping of its own pre-mRNA during muscle cell differentiation. Binds to the polypyrimidine tract of introns. May promote RNA looping when bound to two separate polypyrimidine tracts in the same pre-mRNA. May promote the binding of U2 snRNP to pre-mRNA. Cooperates with RAVER1 to modulate switching between mutually exclusive exons during maturation of the TPM1 pre-mRNA. Represses the splicing of MAPT/Tau exon 10. Binds to polypyrimidine-rich controlling element (PCE) of CFTR and promotes exon skipping of CFTR exon 9, thereby antagonizing TIA1 and its role in exon inclusion of CFTR exon 9. Plays a role in the splicing of pyruvate kinase PKM by binding repressively to a polypyrimidine tract flanking PKM exon 9, inhibiting exon 9 inclusion and resulting in exon 10 inclusion and production of the PKM M2 isoform. The chain is Polypyrimidine tract-binding protein 1 (PTBP1) from Bos taurus (Bovine).